Consider the following 368-residue polypeptide: Phosphate acyltransferase (368 aa).

The tract at residues 337 to 368 (LGEGEHNAGGAGHASPAAGHHAEPSAAQSSKA) is disordered. Low complexity predominate over residues 349-368 (HASPAAGHHAEPSAAQSSKA).

It belongs to the PlsX family. In terms of assembly, homodimer. Probably interacts with PlsY.

The protein resides in the cytoplasm. It catalyses the reaction a fatty acyl-[ACP] + phosphate = an acyl phosphate + holo-[ACP]. It functions in the pathway lipid metabolism; phospholipid metabolism. Catalyzes the reversible formation of acyl-phosphate (acyl-PO(4)) from acyl-[acyl-carrier-protein] (acyl-ACP). This enzyme utilizes acyl-ACP as fatty acyl donor, but not acyl-CoA. The polypeptide is Phosphate acyltransferase (Burkholderia lata (strain ATCC 17760 / DSM 23089 / LMG 22485 / NCIMB 9086 / R18194 / 383)).